Here is a 185-residue protein sequence, read N- to C-terminus: Comitin (185 aa).

A Bulb-type lectin domain is found at 1-123; it reads MELLRQGEHL…YKQILYSSKP (123 aa). Positions 138-185 are disordered; that stretch reads SGHPQSAYPPQQPGYGYPAQPGYPPQPGYPPQHGYPPQHGYPQQPGYY. Low complexity predominate over residues 141–157; it reads PQSAYPPQQPGYGYPAQ. A run of 5 repeats spans residues 153–158, 159–164, 165–170, 171–176, and 177–182. The tract at residues 153 to 182 is 5 X 6 AA tandem repeats of G-Y-P-X-Q-[PH]; it reads GYPAQPGYPPQPGYPPQHGYPPQHGYPQQP. Over residues 158 to 171 the composition is skewed to pro residues; it reads PGYPPQPGYPPQHG. Over residues 172–185 the composition is skewed to low complexity; sequence YPPQHGYPQQPGYY.

As to quaternary structure, homodimer in solution. Post-translationally, the N-terminus is blocked.

Its subcellular location is the golgi apparatus membrane. It is found in the endomembrane system. It localises to the cytoplasm. The protein resides in the cytoskeleton. Functionally, may have a role in cell motility. It has high affinity for both G-actin and F-actin. Binds to vesicle membranes via mannose residues and, by way of its interaction with actin, links these membranes to the cytoskeleton. The chain is Comitin (comA) from Dictyostelium discoideum (Social amoeba).